Consider the following 120-residue polypeptide: MQKPKLNKVKYSFSESFLIFAVALAAALTGSLIGLLIDCFILKISGTVDIIEVWSELCYTKIISLFSFFGIILYFHYDNFKINWQRKKDYKIQLKEYNSYMSYIENESMKEFVIDCRKIK.

This is an uncharacterized protein from Enterobacteria phage T4 (Bacteriophage T4).